We begin with the raw amino-acid sequence, 427 residues long: Adenylosuccinate synthetase (427 aa).

Residues 12 to 18 (GDEGKGK) and 40 to 42 (GHT) contribute to the GTP site. The Proton acceptor role is filled by Asp-13. Residues Asp-13 and Gly-40 each contribute to the Mg(2+) site. IMP-binding positions include 13-16 (DEGK), 38-41 (NAGH), Thr-130, Arg-144, Gln-224, Thr-239, and Arg-303. The Proton donor role is filled by His-41. A substrate-binding site is contributed by 299-305 (VTTGRAR). Residues Arg-305, 331 to 333 (KID), and 413 to 415 (SVG) contribute to the GTP site.

Belongs to the adenylosuccinate synthetase family. In terms of assembly, homodimer. Mg(2+) is required as a cofactor.

The protein localises to the cytoplasm. It catalyses the reaction IMP + L-aspartate + GTP = N(6)-(1,2-dicarboxyethyl)-AMP + GDP + phosphate + 2 H(+). Its pathway is purine metabolism; AMP biosynthesis via de novo pathway; AMP from IMP: step 1/2. In terms of biological role, plays an important role in the de novo pathway of purine nucleotide biosynthesis. Catalyzes the first committed step in the biosynthesis of AMP from IMP. The polypeptide is Adenylosuccinate synthetase (Clostridium novyi (strain NT)).